Here is a 263-residue protein sequence, read N- to C-terminus: Putative S-adenosyl-L-methionine-dependent methyltransferase Mkms_0098 (263 aa).

Residues aspartate 121 and 150-151 contribute to the S-adenosyl-L-methionine site; that span reads ES.

This sequence belongs to the UPF0677 family.

Exhibits S-adenosyl-L-methionine-dependent methyltransferase activity. This Mycobacterium sp. (strain KMS) protein is Putative S-adenosyl-L-methionine-dependent methyltransferase Mkms_0098.